A 667-amino-acid polypeptide reads, in one-letter code: Soluble guanylate cyclase 89Da (667 aa).

His104 provides a ligand contact to heme. Residues 337-364 form a disordered region; sequence AQEFSESHPVDDDESAREDEIDPATGER. Acidic residues predominate over residues 347-358; it reads DDDESAREDEID. A coiled-coil region spans residues 427-455; sequence QHCSKLEIMFEKEEQRSDELEKSLELADS. The region spanning 491-617 is the Guanylate cyclase domain; that stretch reads SVIFLEVMNV…DTVNTASRME (127 aa).

It belongs to the adenylyl cyclase class-4/guanylyl cyclase family. Heterodimer; with Gyc88E, in the presence of magnesium or manganese. Requires heme as cofactor.

The protein localises to the cytoplasm. The enzyme catalyses GTP = 3',5'-cyclic GMP + diphosphate. With respect to regulation, probably not activated by nitric oxide (NO). Heterodimer also exhibits some stimulation, some compounds (SIN-1 and two of the NONOates) that were ineffective at stimulating Gyc-88E alone did stimulate the heterodimer. Heterodimers with Gyc-89Da and Gyc-89Db are activated in response to changing oxygen concentrations, alerting flies to hypoxic environments. Under normal oxygen concentrations, oxygen binds to the heme group and results in low levels of guanylyl cyclase activity. When exposed to reduced oxygen concentrations, the oxygen dissociates from the heme group resulting in activation of the enzyme. The chain is Soluble guanylate cyclase 89Da from Drosophila melanogaster (Fruit fly).